The following is a 223-amino-acid chain: uncharacterized protein (223 aa).

A signal peptide spans 1-22; sequence MHLKKALCPALCTFLIHLCLHA. Positions 30 to 204 constitute a VWFA domain; it reads DIFLMIDKSR…RSIAAAHSKR (175 aa). The interval 199-223 is disordered; the sequence is AAHSKRPTPTPPAKESSPRYTPSLD.

This is an uncharacterized protein from Treponema pallidum (strain Nichols).